A 239-amino-acid polypeptide reads, in one-letter code: NADH-quinone oxidoreductase subunit I 1 (239 aa).

4Fe-4S ferredoxin-type domains are found at residues 81–111 and 123–152; these read LVPR…IEAA and AKFV…MDSG. [4Fe-4S] cluster is bound by residues cysteine 91, cysteine 94, cysteine 97, cysteine 101, cysteine 132, cysteine 135, cysteine 138, and cysteine 142.

It belongs to the complex I 23 kDa subunit family. NDH-1 is composed of 14 different subunits. Subunits NuoA, H, J, K, L, M, N constitute the membrane sector of the complex. [4Fe-4S] cluster serves as cofactor.

It is found in the cell inner membrane. The catalysed reaction is a quinone + NADH + 5 H(+)(in) = a quinol + NAD(+) + 4 H(+)(out). Its function is as follows. NDH-1 shuttles electrons from NADH, via FMN and iron-sulfur (Fe-S) centers, to quinones in the respiratory chain. The immediate electron acceptor for the enzyme in this species is believed to be ubiquinone. Couples the redox reaction to proton translocation (for every two electrons transferred, four hydrogen ions are translocated across the cytoplasmic membrane), and thus conserves the redox energy in a proton gradient. This Anaeromyxobacter dehalogenans (strain 2CP-C) protein is NADH-quinone oxidoreductase subunit I 1.